The sequence spans 122 residues: Head fiber dimeric protein (122 aa).

As to quaternary structure, homodimer. Interacts with the major capsid protein.

The protein localises to the virion. Forms short fibers at the surface of the viral capsid. The polypeptide is Head fiber dimeric protein (Bacteroides intestinalis (Bacteroides phage PhiCrAss001)).